The chain runs to 739 residues: Catalase-peroxidase (739 aa).

The tract at residues Met-1–Gly-33 is disordered. The segment at residues Trp-106–Tyr-229 is a cross-link (tryptophyl-tyrosyl-methioninium (Trp-Tyr) (with M-255)). Residue His-107 is the Proton acceptor of the active site. Residues Arg-113 to Trp-134 form a disordered region. The tryptophyl-tyrosyl-methioninium (Tyr-Met) (with W-106) cross-link spans Tyr-229–Met-255. His-270 is a binding site for heme b.

Belongs to the peroxidase family. Peroxidase/catalase subfamily. In terms of assembly, homodimer or homotetramer. Requires heme b as cofactor. Post-translationally, formation of the three residue Trp-Tyr-Met cross-link is important for the catalase, but not the peroxidase activity of the enzyme.

The catalysed reaction is H2O2 + AH2 = A + 2 H2O. The enzyme catalyses 2 H2O2 = O2 + 2 H2O. Bifunctional enzyme with both catalase and broad-spectrum peroxidase activity. This is Catalase-peroxidase from Nocardia farcinica (strain IFM 10152).